The sequence spans 156 residues: ATP synthase subunit b (156 aa).

Residues 3–23 form a helical membrane-spanning segment; that stretch reads ITFTIFAQSIAFAALIWIVAT.

The protein belongs to the ATPase B chain family. As to quaternary structure, F-type ATPases have 2 components, F(1) - the catalytic core - and F(0) - the membrane proton channel. F(1) has five subunits: alpha(3), beta(3), gamma(1), delta(1), epsilon(1). F(0) has three main subunits: a(1), b(2) and c(10-14). The alpha and beta chains form an alternating ring which encloses part of the gamma chain. F(1) is attached to F(0) by a central stalk formed by the gamma and epsilon chains, while a peripheral stalk is formed by the delta and b chains.

It is found in the cell inner membrane. Functionally, f(1)F(0) ATP synthase produces ATP from ADP in the presence of a proton or sodium gradient. F-type ATPases consist of two structural domains, F(1) containing the extramembraneous catalytic core and F(0) containing the membrane proton channel, linked together by a central stalk and a peripheral stalk. During catalysis, ATP synthesis in the catalytic domain of F(1) is coupled via a rotary mechanism of the central stalk subunits to proton translocation. Component of the F(0) channel, it forms part of the peripheral stalk, linking F(1) to F(0). The protein is ATP synthase subunit b of Xylella fastidiosa (strain M12).